A 347-amino-acid polypeptide reads, in one-letter code: MAFLCKSNDNTKVSMEIEKSIKDDKRTFLGITQVLLLGAGESGKSTIFKQLKILQENGLWTTKELQEFSNTIYINIITQLQVLINAAESIGIQLQPENIQLSKDYLELNHSSVTWTKEIGENSVRLWNDSGIKSTFEKRDKEFQLNDSAEYFFNNLQRVTQDNYIPTPQDALRARVTTKGIIEADVTFDNINMKIIDVGGQRSQRRKWIHCFDKVSAVIYVAGLSEYDQALREDINVNKMDESLSLFKEICNSKWFDSSSIILFLNKKDMFIEKLKRVPFKTYDKKYTGENSFEAVSLHIQRKFESVKIDPNKKIYTHFTIAVDTENIEFVFKVIKKIIVGHVMDLV.

Residues 30–347 enclose the G-alpha domain; the sequence is GITQVLLLGA…IIVGHVMDLV (318 aa). The tract at residues 33–46 is G1 motif; that stretch reads QVLLLGAGESGKST. GTP contacts are provided by residues 38-45, 172-178, 197-201, 266-269, and Ala-322; these read GAGESGKS, LRARVTT, DVGGQ, and NKKD. Residues Ser-45 and Thr-178 each coordinate Mg(2+). Residues 170-178 form a G2 motif region; that stretch reads DALRARVTT. The G3 motif stretch occupies residues 193–202; it reads MKIIDVGGQR. Residues 262-269 form a G4 motif region; sequence ILFLNKKD. The G5 motif stretch occupies residues 320–325; sequence TIAVDT.

The protein belongs to the G-alpha family. As to quaternary structure, g proteins are composed of 3 units; alpha, beta and gamma. The alpha chain contains the guanine nucleotide binding site.

In terms of biological role, guanine nucleotide-binding proteins (G proteins) are involved as modulators or transducers in various transmembrane signaling systems. G alpha-6 is involved in the folic acid chemotaxis signal transduction pathway. The chain is Guanine nucleotide-binding protein alpha-6 subunit (gpaF) from Dictyostelium discoideum (Social amoeba).